The following is a 303-amino-acid chain: Putative S-adenosyl-L-methionine-dependent methyltransferase Mb1931c (303 aa).

Residues aspartate 129 and 158–159 (DL) contribute to the S-adenosyl-L-methionine site.

The protein belongs to the UPF0677 family.

In terms of biological role, exhibits S-adenosyl-L-methionine-dependent methyltransferase activity. This is Putative S-adenosyl-L-methionine-dependent methyltransferase Mb1931c from Mycobacterium bovis (strain ATCC BAA-935 / AF2122/97).